The chain runs to 102 residues: Small ribosomal subunit protein uS10 (102 aa).

Belongs to the universal ribosomal protein uS10 family. In terms of assembly, part of the 30S ribosomal subunit.

In terms of biological role, involved in the binding of tRNA to the ribosomes. In Malacoplasma penetrans (strain HF-2) (Mycoplasma penetrans), this protein is Small ribosomal subunit protein uS10.